Consider the following 710-residue polypeptide: mRNA export factor crp79 (710 aa).

2 RRM domains span residues 19–102 (IYVG…KLTI) and 222–292 (HFKQ…PTTP). Polar residues predominate over residues 333–348 (QWGSVSTTGVSNQQNH). Positions 333–357 (QWGSVSTTGVSNQQNHPAAWNPDNK) are disordered. Positions 401–474 (EDLFSPFGSI…DRIRRLQAFF (74 aa)) constitute an RRM 3 domain. Polar residues predominate over residues 502 to 524 (TIRKPIESSTNKISENPTTLSSK). Residues 502 to 544 (TIRKPIESSTNKISENPTTLSSKVENKNEPKTGENKEPSQTNE) are disordered. Over residues 525–538 (VENKNEPKTGENKE) the composition is skewed to basic and acidic residues.

The protein resides in the cytoplasm. It localises to the nucleus. Binds the poly(A) tail of mRNA. Involved in the export of mRNA from the nucleus to the cytoplasm. The sequence is that of mRNA export factor crp79 (crp79) from Schizosaccharomyces pombe (strain 972 / ATCC 24843) (Fission yeast).